The chain runs to 313 residues: D-alanine--D-alanine ligase (313 aa).

The ATP-grasp domain occupies 108–308 (KLVWQQTGVP…YSELVVKVLS (201 aa)). An ATP-binding site is contributed by 138–193 (VAKLGLPLFVKPASEGSSVAVLKVKTADALPAALSEAATHDKIVIVEKSIEGGGEY). Residues D262, E275, and N277 each contribute to the Mg(2+) site.

The protein belongs to the D-alanine--D-alanine ligase family. Mg(2+) serves as cofactor. Mn(2+) is required as a cofactor.

The protein resides in the cytoplasm. The enzyme catalyses 2 D-alanine + ATP = D-alanyl-D-alanine + ADP + phosphate + H(+). Its pathway is cell wall biogenesis; peptidoglycan biosynthesis. Functionally, cell wall formation. The polypeptide is D-alanine--D-alanine ligase (Burkholderia ambifaria (strain MC40-6)).